Consider the following 557-residue polypeptide: Coiled-coil domain-containing protein 22 homolog (557 aa).

2 coiled-coil regions span residues 260 to 350 (RLGQ…LQSQ) and 489 to 554 (ELTA…AGRN).

Belongs to the CCDC22 family.

This Anopheles gambiae (African malaria mosquito) protein is Coiled-coil domain-containing protein 22 homolog.